A 192-amino-acid chain; its full sequence is uncharacterized protein (192 aa).

Residues 168-192 (PLWRKSEAGSRKARTSNSGGPTKRA) form a disordered region. Residues 182–192 (TSNSGGPTKRA) are compositionally biased toward polar residues.

The protein to A.xylinum IS1268 ORFA.

This is an uncharacterized protein from Sinorhizobium fredii (strain NBRC 101917 / NGR234).